A 73-amino-acid chain; its full sequence is Small ribosomal subunit protein bS21 (73 aa).

Belongs to the bacterial ribosomal protein bS21 family.

The polypeptide is Small ribosomal subunit protein bS21 (Parvibaculum lavamentivorans (strain DS-1 / DSM 13023 / NCIMB 13966)).